A 485-amino-acid chain; its full sequence is Homeobox protein unplugged (485 aa).

3 disordered regions span residues 1-65 (MERP…QEQE), 114-157 (PAGH…DTRF), and 212-325 (GMAQ…RRTA). Acidic residues predominate over residues 54-64 (RDQEQEAEQEQ). The span at 114–128 (PAGHPAAQQPQAQAQ) shows a compositional bias: low complexity. Polar residues-rich tracts occupy residues 223-234 (QAHSSPAKSGSH) and 254-267 (DSCS…SPRN). The segment covering 284–293 (DSEDCSDDEG) has biased composition (acidic residues). Residues 308-317 (SQGNGSSSNS) are compositionally biased toward low complexity. A DNA-binding region (homeobox) is located at residues 319–378 (SRRRRTAFTSEQLLELEREFHAKKYLSLTERSQIATSLKLSEVQVKIWFQNRRAKWKRVK).

As to expression, expressed in the neuroectodermal and mesectodermal cells at the ventral midline of stage 8 embryos, Subsequently, expression domains in the CNS widen and have their most anterior border in the posterior deutocerebrum. Oc/otd and unpg are mutual repressors at the interface of their brain-specific expression domains. Expression fades during germ band retraction and is then restricted to subset of cells by stage 14. Expressed in the founder cells of the cerebral branch within the first tracheal metamere. Outside the CNS, expression is seen in two clusters of ectodermal cells located laterally within the labial and first thoracic segments of stage 9 embryos. By stage 13, the expression is detected in a few cells close to the dorsal midline of the embryos.

The protein localises to the nucleus. Functionally, plays a regulatory role in neural branching of the tracheae: segment-specific aspects of these neural branching patterns appear to be generated by homeotic regulation of expression. May have a role with oc/otd in the postembryonic development of the brain. The chain is Homeobox protein unplugged from Drosophila melanogaster (Fruit fly).